A 248-amino-acid chain; its full sequence is Ureidoacrylate amidohydrolase RutB (248 aa).

Asp41 acts as the Proton acceptor in catalysis. Lys150 is a catalytic residue. Cys183 (nucleophile) is an active-site residue.

It belongs to the isochorismatase family. RutB subfamily.

The catalysed reaction is (Z)-3-ureidoacrylate + H2O + H(+) = (Z)-3-aminoacrylate + NH4(+) + CO2. The enzyme catalyses (Z)-3-ureidoacrylate + H2O = (Z)-3-aminoacrylate + carbamate + H(+). It catalyses the reaction (Z)-2-methylureidoacrylate + H2O + H(+) = (Z)-2-methylaminoacrylate + NH4(+) + CO2. In terms of biological role, hydrolyzes ureidoacrylate to form aminoacrylate and carbamate. The carbamate hydrolyzes spontaneously, thereby releasing one of the nitrogen atoms of the pyrimidine ring as ammonia and one of its carbon atoms as CO2. The sequence is that of Ureidoacrylate amidohydrolase RutB from Stutzerimonas stutzeri (strain A1501) (Pseudomonas stutzeri).